The primary structure comprises 20 residues: Implantin (20 aa).

It belongs to the EF-1-beta/EF-1-delta family. Phosphorylated. Uterus and embryo.

Its subcellular location is the cytoplasm. The protein localises to the nucleus. In terms of biological role, binds DNA. The chain is Implantin from Mus musculus (Mouse).